Here is a 404-residue protein sequence, read N- to C-terminus: G1/S-specific cyclin-E2 (404 aa).

The segment at 1 to 41 (MSRRSSRLQAKQHAQPNQPDSPQETQIIQAKKRKTAQDVKK) is disordered. Positions 7 to 28 (RLQAKQHAQPNQPDSPQETQII) are enriched in polar residues. Ser-21 carries the phosphoserine modification. An N6-lactoyllysine modification is found at Lys-348. Ser-383 is subject to Phosphoserine. Thr-392 bears the Phosphothreonine mark.

It belongs to the cyclin family. Cyclin E subfamily. In terms of assembly, interacts with the CDK2 (in vivo) and CDK3 (in vitro) protein kinases to form a serine/threonine kinase holoenzyme complex. The cyclin subunit imparts substrate specificity to the complex. Post-translationally, phosphorylation by CDK2 triggers its release from CDK2 and degradation via the ubiquitin proteasome pathway. Lactylated at Lys-348. Delactylated by SIRT3. Highest levels in adult testis, thymus and brain. Lower levels in placenta, spleen and colon.

It is found in the nucleus. Essential for the control of the cell cycle at the late G1 and early S phase. In Mus musculus (Mouse), this protein is G1/S-specific cyclin-E2 (Ccne2).